A 446-amino-acid chain; its full sequence is 3-phosphoshikimate 1-carboxyvinyltransferase (446 aa).

Residues 1-20 (MSTWPAPSTATPVHATVTVP) are disordered. 3-phosphoshikimate-binding residues include Lys-23, Ser-24, and Arg-28. Residue Lys-23 participates in phosphoenolpyruvate binding. Residues Gly-100 and Arg-128 each contribute to the phosphoenolpyruvate site. 3-phosphoshikimate-binding residues include Ser-171, Ser-172, Gln-173, Ser-200, Glu-315, and His-344. Gln-173 contributes to the phosphoenolpyruvate binding site. Glu-315 acts as the Proton acceptor in catalysis. Phosphoenolpyruvate is bound by residues Arg-348, Arg-389, and Lys-414.

It belongs to the EPSP synthase family. As to quaternary structure, monomer.

The protein resides in the cytoplasm. The enzyme catalyses 3-phosphoshikimate + phosphoenolpyruvate = 5-O-(1-carboxyvinyl)-3-phosphoshikimate + phosphate. It participates in metabolic intermediate biosynthesis; chorismate biosynthesis; chorismate from D-erythrose 4-phosphate and phosphoenolpyruvate: step 6/7. In terms of biological role, catalyzes the transfer of the enolpyruvyl moiety of phosphoenolpyruvate (PEP) to the 5-hydroxyl of shikimate-3-phosphate (S3P) to produce enolpyruvyl shikimate-3-phosphate and inorganic phosphate. This is 3-phosphoshikimate 1-carboxyvinyltransferase from Mycolicibacterium vanbaalenii (strain DSM 7251 / JCM 13017 / BCRC 16820 / KCTC 9966 / NRRL B-24157 / PYR-1) (Mycobacterium vanbaalenii).